The chain runs to 206 residues: Ion-translocating oxidoreductase complex subunit G (206 aa).

Residues 9–29 (GITLALFAAGSTGLTAAINQM) traverse the membrane as a helical segment. At T174 the chain carries FMN phosphoryl threonine.

The protein belongs to the RnfG family. In terms of assembly, the complex is composed of six subunits: RsxA, RsxB, RsxC, RsxD, RsxE and RsxG. Requires FMN as cofactor.

The protein localises to the cell inner membrane. Part of a membrane-bound complex that couples electron transfer with translocation of ions across the membrane. Required to maintain the reduced state of SoxR. This Escherichia coli O157:H7 protein is Ion-translocating oxidoreductase complex subunit G.